The following is a 101-amino-acid chain: Salivary thrombin inhibitor anophelin (101 aa).

A signal peptide spans 1-21 (MASKVIVIALLCIALAAFVQG). Positions 26-101 (THGEEPEYDE…SDSSSGSTEN (76 aa)) are disordered. The span at 31–40 (PEYDEDDGAD) shows a compositional bias: acidic residues. The segment at 75 to 78 (DPGR) is blocks active site cleft of host thrombin in a reverse direction compared to substrates. Basic and acidic residues predominate over residues 75–87 (DPGRRPEFLKQHN). The span at 88 to 101 (NENQSDSSSGSTEN) shows a compositional bias: polar residues. N90 carries N-linked (GlcNAc...) asparagine glycosylation.

The protein belongs to the anophelin family. In terms of assembly, interacts with human F2 (thrombin); the interaction results in thrombin inhibition.

The protein localises to the secreted. In terms of biological role, salivary protein with anticoagulant activity that inhibits host thrombin (F2). The protein is Salivary thrombin inhibitor anophelin of Anopheles stephensi (Indo-Pakistan malaria mosquito).